We begin with the raw amino-acid sequence, 144 residues long: Transcriptional regulator SlyA (144 aa).

The HTH marR-type domain maps to E2–K135. The segment at residues Q49–E72 is a DNA-binding region (H-T-H motif).

The protein belongs to the SlyA family. In terms of assembly, homodimer.

In terms of biological role, transcription regulator that can specifically activate or repress expression of target genes. This Sodalis glossinidius (strain morsitans) protein is Transcriptional regulator SlyA.